The sequence spans 464 residues: Argininosuccinate lyase (464 aa).

It belongs to the lyase 1 family. Argininosuccinate lyase subfamily.

It localises to the cytoplasm. It carries out the reaction 2-(N(omega)-L-arginino)succinate = fumarate + L-arginine. The protein operates within amino-acid biosynthesis; L-arginine biosynthesis; L-arginine from L-ornithine and carbamoyl phosphate: step 3/3. The protein is Argininosuccinate lyase of Pseudomonas syringae pv. syringae (strain B728a).